The sequence spans 418 residues: Glutamyl-tRNA reductase (418 aa).

Residues 49-52 (TCNR), S109, 114-116 (EPQ), and Q120 contribute to the substrate site. C50 functions as the Nucleophile in the catalytic mechanism. 189–194 (GAGETI) contributes to the NADP(+) binding site.

Belongs to the glutamyl-tRNA reductase family. Homodimer.

The enzyme catalyses (S)-4-amino-5-oxopentanoate + tRNA(Glu) + NADP(+) = L-glutamyl-tRNA(Glu) + NADPH + H(+). It participates in porphyrin-containing compound metabolism; protoporphyrin-IX biosynthesis; 5-aminolevulinate from L-glutamyl-tRNA(Glu): step 1/2. In terms of biological role, catalyzes the NADPH-dependent reduction of glutamyl-tRNA(Glu) to glutamate 1-semialdehyde (GSA). This Shigella dysenteriae serotype 1 (strain Sd197) protein is Glutamyl-tRNA reductase.